The chain runs to 474 residues: Phenolic acid decarboxylase (474 aa).

Mn(2+)-binding residues include N161, H182, and E224. Prenylated FMN is bound by residues 161-166 (NVGTYR) and 181-182 (MH). The active-site Proton donor is E273.

It belongs to the UbiD family. YclC subfamily. The cofactor is prenylated FMN. Mn(2+) serves as cofactor.

It carries out the reaction vanillate + H(+) = guaiacol + CO2. Its function is as follows. Involved in the non-oxidative decarboxylation and detoxification of phenolic derivatives under both aerobic and anaerobic conditions. Phenolic acid decarboxylase that catalyzes the reversible decarboxylation of vanillate. The polypeptide is Phenolic acid decarboxylase (Streptomyces sp. (strain D7)).